Here is a 213-residue protein sequence, read N- to C-terminus: Large ribosomal subunit protein uL3 (213 aa).

Position 151 is an N5-methylglutamine (Q151).

Belongs to the universal ribosomal protein uL3 family. In terms of assembly, part of the 50S ribosomal subunit. Forms a cluster with proteins L14 and L19. Post-translationally, methylated by PrmB.

Its function is as follows. One of the primary rRNA binding proteins, it binds directly near the 3'-end of the 23S rRNA, where it nucleates assembly of the 50S subunit. In Allorhizobium ampelinum (strain ATCC BAA-846 / DSM 112012 / S4) (Agrobacterium vitis (strain S4)), this protein is Large ribosomal subunit protein uL3.